The primary structure comprises 615 residues: Dihydroxy-acid dehydratase (615 aa).

Asp-81 contacts Mg(2+). Residue Cys-122 coordinates [2Fe-2S] cluster. Mg(2+) contacts are provided by Asp-123 and Lys-124. Lys-124 carries the N6-carboxylysine modification. Cys-193 contributes to the [2Fe-2S] cluster binding site. Glu-489 contacts Mg(2+). The Proton acceptor role is filled by Ser-515.

This sequence belongs to the IlvD/Edd family. In terms of assembly, homodimer. [2Fe-2S] cluster serves as cofactor. It depends on Mg(2+) as a cofactor.

The enzyme catalyses (2R)-2,3-dihydroxy-3-methylbutanoate = 3-methyl-2-oxobutanoate + H2O. It catalyses the reaction (2R,3R)-2,3-dihydroxy-3-methylpentanoate = (S)-3-methyl-2-oxopentanoate + H2O. Its pathway is amino-acid biosynthesis; L-isoleucine biosynthesis; L-isoleucine from 2-oxobutanoate: step 3/4. The protein operates within amino-acid biosynthesis; L-valine biosynthesis; L-valine from pyruvate: step 3/4. Functionally, functions in the biosynthesis of branched-chain amino acids. Catalyzes the dehydration of (2R,3R)-2,3-dihydroxy-3-methylpentanoate (2,3-dihydroxy-3-methylvalerate) into 2-oxo-3-methylpentanoate (2-oxo-3-methylvalerate) and of (2R)-2,3-dihydroxy-3-methylbutanoate (2,3-dihydroxyisovalerate) into 2-oxo-3-methylbutanoate (2-oxoisovalerate), the penultimate precursor to L-isoleucine and L-valine, respectively. The sequence is that of Dihydroxy-acid dehydratase from Pseudomonas syringae pv. syringae (strain B728a).